A 155-amino-acid chain; its full sequence is Microsomal glutathione S-transferase 1 (155 aa).

The Lumenal segment spans residues 3–9; the sequence is DLRQLMD. The chain crosses the membrane as a helical span at residues 10-33; that stretch reads NEVLMAFTSYATIILTKMMFMSSA. Residues 34-62 are Cytoplasmic-facing; it reads TAFQRITNKVFANPEDCAGFGKGENAKKF. Residue arginine 38 coordinates glutathione. N6-acetyllysine is present on residues lysine 42, lysine 55, and lysine 60. A helical membrane pass occupies residues 63–96; that stretch reads VRTDEKVERVRRAHLNDLENIVPFLGIGLLYSLS. Residues arginine 73, arginine 74, histidine 76, and glutamate 81 each contribute to the glutathione site. Topologically, residues 97-99 are lumenal; that stretch reads GPD. Residues 100 to 123 traverse the membrane as a helical segment; that stretch reads LSTALMHFRIFVGARIYHTIAYLT. Tyrosine 121 provides a ligand contact to glutathione. Over 124 to 128 the chain is Cytoplasmic; it reads PLPQP. Residues 129-148 traverse the membrane as a helical segment; sequence NRGLAFFVGYGVTLSMAYRL. The Lumenal segment spans residues 149 to 155; that stretch reads LRSRLYL.

This sequence belongs to the MAPEG family. As to quaternary structure, homotrimer; The trimer binds only one molecule of glutathione. Post-translationally, acetylation of Lys-42 and Lys-55 is observed in liver mitochondria from fasted mice but not from fed mice. In terms of tissue distribution, expressed in the testes (at protein level).

Its subcellular location is the endoplasmic reticulum membrane. It is found in the mitochondrion outer membrane. The enzyme catalyses RX + glutathione = an S-substituted glutathione + a halide anion + H(+). In terms of biological role, conjugation of reduced glutathione to a wide number of exogenous and endogenous hydrophobic electrophiles. The sequence is that of Microsomal glutathione S-transferase 1 (Mgst1) from Mus musculus (Mouse).